The chain runs to 421 residues: Thymidine phosphorylase (421 aa).

It belongs to the thymidine/pyrimidine-nucleoside phosphorylase family. Homodimer.

The enzyme catalyses thymidine + phosphate = 2-deoxy-alpha-D-ribose 1-phosphate + thymine. Functionally, the enzymes which catalyze the reversible phosphorolysis of pyrimidine nucleosides are involved in the degradation of these compounds and in their utilization as carbon and energy sources, or in the rescue of pyrimidine bases for nucleotide synthesis. The polypeptide is Thymidine phosphorylase (deoA) (Mycoplasma pneumoniae (strain ATCC 29342 / M129 / Subtype 1) (Mycoplasmoides pneumoniae)).